Consider the following 176-residue polypeptide: ATP-dependent protease subunit HslV (176 aa).

Residue threonine 6 is part of the active site. 3 residues coordinate Na(+): glycine 161, cysteine 164, and threonine 167.

Belongs to the peptidase T1B family. HslV subfamily. A double ring-shaped homohexamer of HslV is capped on each side by a ring-shaped HslU homohexamer. The assembly of the HslU/HslV complex is dependent on binding of ATP.

The protein resides in the cytoplasm. The catalysed reaction is ATP-dependent cleavage of peptide bonds with broad specificity.. Its activity is regulated as follows. Allosterically activated by HslU binding. Protease subunit of a proteasome-like degradation complex believed to be a general protein degrading machinery. This chain is ATP-dependent protease subunit HslV, found in Thermotoga sp. (strain RQ2).